We begin with the raw amino-acid sequence, 281 residues long: NADPH-dependent 7-cyano-7-deazaguanine reductase (281 aa).

V81–S83 contributes to the substrate binding site. S83–K84 provides a ligand contact to NADPH. The Thioimide intermediate role is filled by C188. The Proton donor role is filled by D195. Residue H227 to E228 coordinates substrate. An NADPH-binding site is contributed by R256–G257. The tract at residues I261–Q281 is disordered.

The protein belongs to the GTP cyclohydrolase I family. QueF type 2 subfamily. As to quaternary structure, homodimer.

Its subcellular location is the cytoplasm. The catalysed reaction is 7-aminomethyl-7-carbaguanine + 2 NADP(+) = 7-cyano-7-deazaguanine + 2 NADPH + 3 H(+). It functions in the pathway tRNA modification; tRNA-queuosine biosynthesis. Its function is as follows. Catalyzes the NADPH-dependent reduction of 7-cyano-7-deazaguanine (preQ0) to 7-aminomethyl-7-deazaguanine (preQ1). This chain is NADPH-dependent 7-cyano-7-deazaguanine reductase, found in Verminephrobacter eiseniae (strain EF01-2).